The sequence spans 83 residues: Gas vesicle protein G (83 aa).

The protein belongs to the gas vesicle GvpG family. As to quaternary structure, gvpF to GvpM interact with each other in vitro, and may form multi-subunit complex(es).

Its subcellular location is the gas vesicle. In terms of biological role, proteins GvpF to GvpM might be involved in nucleating gas vesicle formation. A minor component of the gas vesicle. Gas vesicles are hollow, gas filled proteinaceous nanostructures found in some microorganisms. They allow positioning of halobacteria at the optimal depth for growth in the poorly aerated, shallow brine pools of their habitat. Expression of a 9.5 kb mc-vac DNA fragment containing 2 divergently transcribed regions (gvpD-gvpE-gvpF-gvpG-gvpH-gvpI-gvpJ-gvpK-gvpL-gvpM and gvpA-gvpC-gvpN-gvpO) allows H.volcanii to produce gas vesicles. This chain is Gas vesicle protein G, found in Haloferax mediterranei (strain ATCC 33500 / DSM 1411 / JCM 8866 / NBRC 14739 / NCIMB 2177 / R-4) (Halobacterium mediterranei).